The sequence spans 436 residues: Serine carboxypeptidase-like 15 (436 aa).

An N-terminal signal peptide occupies residues M1–S24. Cystine bridges form between C83–C326, C247–C261, and C285–C292. A glycan (N-linked (GlcNAc...) asparagine) is linked at N104. The active site involves S179. N306 and N345 each carry an N-linked (GlcNAc...) asparagine glycan. D361 is a catalytic residue. N377 carries N-linked (GlcNAc...) asparagine glycosylation. H414 is a catalytic residue.

This sequence belongs to the peptidase S10 family. As to expression, expressed in seedlings and roots.

It is found in the secreted. Its function is as follows. Probable carboxypeptidase. The polypeptide is Serine carboxypeptidase-like 15 (SCPL15) (Arabidopsis thaliana (Mouse-ear cress)).